A 396-amino-acid chain; its full sequence is GTPase Obg (396 aa).

The region spanning 1–159 (MKFVDEATIY…RNIRLELKVL (159 aa)) is the Obg domain. Residues 160 to 333 (ADVGLLGLPN…LCQDIMTWIE (174 aa)) enclose the OBG-type G domain. GTP contacts are provided by residues 166–173 (GLPNAGKS), 191–195 (FTTLV), 213–216 (DIPG), 283–286 (NKTD), and 314–316 (SAL). Residues serine 173 and threonine 193 each coordinate Mg(2+). Disordered regions lie at residues 337 to 356 (EEER…REQM) and 373 to 396 (LARK…FYAP). Positions 347 to 356 (EADRLNREQM) are enriched in basic and acidic residues. Residues 381-396 (SDDDDDDEDVEVFYAP) show a composition bias toward acidic residues.

This sequence belongs to the TRAFAC class OBG-HflX-like GTPase superfamily. OBG GTPase family. Monomer. Requires Mg(2+) as cofactor.

The protein resides in the cytoplasm. Functionally, an essential GTPase which binds GTP, GDP and possibly (p)ppGpp with moderate affinity, with high nucleotide exchange rates and a fairly low GTP hydrolysis rate. Plays a role in control of the cell cycle, stress response, ribosome biogenesis and in those bacteria that undergo differentiation, in morphogenesis control. This is GTPase Obg from Hahella chejuensis (strain KCTC 2396).